The primary structure comprises 281 residues: Phosphonates import ATP-binding protein PhnC (281 aa).

An ABC transporter domain is found at 5-253; that stretch reads IEVCGLTKSF…MLRDLYGTEA (249 aa). Position 38 to 45 (38 to 45) interacts with ATP; sequence GASGSGKS.

Belongs to the ABC transporter superfamily. Phosphonates importer (TC 3.A.1.9.1) family. In terms of assembly, the complex is composed of two ATP-binding proteins (PhnC), two transmembrane proteins (PhnE) and a solute-binding protein (PhnD).

Its subcellular location is the cell inner membrane. It catalyses the reaction phosphonate(out) + ATP + H2O = phosphonate(in) + ADP + phosphate + H(+). In terms of biological role, part of the ABC transporter complex PhnCDE involved in phosphonates import. Responsible for energy coupling to the transport system. In Cupriavidus pinatubonensis (strain JMP 134 / LMG 1197) (Cupriavidus necator (strain JMP 134)), this protein is Phosphonates import ATP-binding protein PhnC.